Consider the following 248-residue polypeptide: N-acylneuraminate-9-phosphatase (248 aa).

Residue D12 coordinates Mg(2+). The phosphate site is built by L13, D14, T131, N132, and K164. Mg(2+) is bound at residue D14. Mg(2+) is bound at residue D189.

The protein belongs to the HAD-like hydrolase superfamily. NANP family. Mg(2+) serves as cofactor.

It carries out the reaction N-acetylneuraminate 9-phosphate + H2O = N-acetylneuraminate + phosphate. The enzyme catalyses N-glycoloylneuraminate 9-phosphate + H2O = N-glycoloylneuraminate + phosphate. It participates in amino-sugar metabolism; N-acetylneuraminate biosynthesis. Its activity is regulated as follows. Inhibited by calcium. Inhibited by vanadate, sodium orthovanate and phosphonate. Functionally, catalyzes the dephosphorylation of N-acylneuraminate 9-phosphate (Neu5Ac-9-P) to sialic acid N-acetylneuraminic acid (Neu5Ac). May also use N-glycoloylneuraminate 9-phosphate as substrate. The protein is N-acylneuraminate-9-phosphatase of Mus musculus (Mouse).